Here is a 180-residue protein sequence, read N- to C-terminus: Large ribosomal subunit protein uL6 (180 aa).

It belongs to the universal ribosomal protein uL6 family. Part of the 50S ribosomal subunit.

This protein binds to the 23S rRNA, and is important in its secondary structure. It is located near the subunit interface in the base of the L7/L12 stalk, and near the tRNA binding site of the peptidyltransferase center. The sequence is that of Large ribosomal subunit protein uL6 from Dictyoglomus turgidum (strain DSM 6724 / Z-1310).